The primary structure comprises 153 residues: Large ribosomal subunit protein uL22 (153 aa).

Belongs to the universal ribosomal protein uL22 family. Part of the 50S ribosomal subunit.

In terms of biological role, this protein binds specifically to 23S rRNA. It makes multiple contacts with different domains of the 23S rRNA in the assembled 50S subunit and ribosome. The globular domain of the protein is located near the polypeptide exit tunnel on the outside of the subunit, while an extended beta-hairpin is found that lines the wall of the exit tunnel in the center of the 70S ribosome. This is Large ribosomal subunit protein uL22 from Methanococcus maripaludis (strain C5 / ATCC BAA-1333).